A 138-amino-acid polypeptide reads, in one-letter code: Large ribosomal subunit protein bL17 (138 aa).

It belongs to the bacterial ribosomal protein bL17 family. Part of the 50S ribosomal subunit. Contacts protein L32.

The sequence is that of Large ribosomal subunit protein bL17 from Solidesulfovibrio magneticus (strain ATCC 700980 / DSM 13731 / RS-1) (Desulfovibrio magneticus).